A 113-amino-acid chain; its full sequence is rRNA-processing protein cgrA (113 aa).

Residues 1 to 15 are compositionally biased toward polar residues; that stretch reads MSTITTSSVASSNGM. Positions 1 to 113 are disordered; it reads MSTITTSSVA…REKRNKLLHS (113 aa). A coiled-coil region spans residues 37–100; it reads SYEKRLEARK…EKMHRKRVER (64 aa). Residues 38-92 show a composition bias toward basic and acidic residues; that stretch reads YEKRLEARKLQEAVKEHEREMREEREAERKAQIQKIKDRRAAKEEKERYEKMAEK. The span at 93-113 shows a compositional bias: basic residues; sequence MHRKRVERLKRREKRNKLLHS.

Belongs to the CGR1 family.

Its subcellular location is the nucleus. The protein resides in the nucleolus. Functionally, involved in nucleolar integrity and required for processing of the pre-rRNA for the 60S ribosome subunit. This is rRNA-processing protein cgrA (cgrA) from Aspergillus clavatus (strain ATCC 1007 / CBS 513.65 / DSM 816 / NCTC 3887 / NRRL 1 / QM 1276 / 107).